The chain runs to 177 residues: Large ribosomal subunit protein uL6 (177 aa).

It belongs to the universal ribosomal protein uL6 family. In terms of assembly, part of the 50S ribosomal subunit.

Its function is as follows. This protein binds to the 23S rRNA, and is important in its secondary structure. It is located near the subunit interface in the base of the L7/L12 stalk, and near the tRNA binding site of the peptidyltransferase center. In Polynucleobacter asymbioticus (strain DSM 18221 / CIP 109841 / QLW-P1DMWA-1) (Polynucleobacter necessarius subsp. asymbioticus), this protein is Large ribosomal subunit protein uL6.